We begin with the raw amino-acid sequence, 122 residues long: Large ribosomal subunit protein uL14 (122 aa).

Belongs to the universal ribosomal protein uL14 family. Part of the 50S ribosomal subunit. Forms a cluster with proteins L3 and L19. In the 70S ribosome, L14 and L19 interact and together make contacts with the 16S rRNA in bridges B5 and B8.

Binds to 23S rRNA. Forms part of two intersubunit bridges in the 70S ribosome. The polypeptide is Large ribosomal subunit protein uL14 (Alcanivorax borkumensis (strain ATCC 700651 / DSM 11573 / NCIMB 13689 / SK2)).